A 174-amino-acid chain; its full sequence is Secretory-abundant heat soluble protein 2 (174 aa).

An N-terminal signal peptide occupies residues 1 to 19; it reads MHRFVLALVVFAGAAIVWA. The tract at residues 30 to 60 is SAHS-c1; it reads EWTGKPWMGKWESDPSKDENVEEFKKKLQLP. The SAHS-c2 stretch occupies residues 77–105; sequence YKKGDEYHHKIIINDAHYKNDIVFKLGQE. A glycan (N-linked (GlcNAc...) asparagine) is linked at Asn111. The interval 118–172 is SAHS-c3; that stretch reads KYEDKDGALVGSVHYTGTKEQSLDKTINNVFKLEGDHLVKTSTIEGVTMKRHYNK.

This sequence belongs to the Secretory-abundant heat soluble protein (SAHS) family.

The protein resides in the secreted. In terms of biological role, secreted heat soluble protein acting as a molecular shield in water-deficient condition. Tardigrade-specific intrinsically disordered proteins (TDPs) are essential for desiccation tolerance by forming non-crystalline amorphous solids upon desiccation, and this vitrified state mirrors their protective capabilities. This chain is Secretory-abundant heat soluble protein 2, found in Ramazzottius varieornatus (Water bear).